The chain runs to 943 residues: Protein translocase subunit SecA (943 aa).

Residues Gln90, 108 to 112 (GEGKT), and Asp509 contribute to the ATP site. The disordered stretch occupies residues 535-560 (PNNEHKPPIPKQRSSKSKGGFSSKVG). The span at 551–560 (SKGGFSSKVG) shows a compositional bias: low complexity.

Belongs to the SecA family. As to quaternary structure, monomer and homodimer. Part of the essential Sec protein translocation apparatus which comprises SecA, SecYEG and auxiliary proteins SecDF. Other proteins may also be involved.

It localises to the cell inner membrane. Its subcellular location is the cellular thylakoid membrane. The protein localises to the cytoplasm. It carries out the reaction ATP + H2O + cellular proteinSide 1 = ADP + phosphate + cellular proteinSide 2.. In terms of biological role, part of the Sec protein translocase complex. Interacts with the SecYEG preprotein conducting channel. Has a central role in coupling the hydrolysis of ATP to the transfer of proteins into and across the cell membrane, serving as an ATP-driven molecular motor driving the stepwise translocation of polypeptide chains across the membrane. Its function is as follows. Probably participates in protein translocation into and across both the cytoplasmic and thylakoid membranes in cyanobacterial cells. This Prochlorococcus marinus (strain MIT 9312) protein is Protein translocase subunit SecA.